Here is a 65-residue protein sequence, read N- to C-terminus: Conotoxin TsMRCL-04 (65 aa).

Residues 1–20 form the signal peptide; sequence MRCLPVFIILLLLIPSAASA. A propeptide spanning residues 21-48 is cleaved from the precursor; sequence AQPETKDDAALASFYDNAKRTLQRHWAK. Glu63 carries the glutamic acid 1-amide modification.

The protein belongs to the conotoxin T superfamily. In terms of processing, contains 2 disulfide bonds that can be either 'C1-C3, C2-C4' or 'C1-C4, C2-C3', since these disulfide connectivities have been observed for conotoxins with cysteine framework V (for examples, see AC P0DQQ7 and AC P81755). Expressed by the venom duct.

The protein localises to the secreted. The protein is Conotoxin TsMRCL-04 of Conus tessulatus (Tessellate cone).